Here is a 347-residue protein sequence, read N- to C-terminus: NHL repeat-containing protein 3 (347 aa).

Residues 1 to 22 (MARAWVCLAGAAFFLSCLVLHS) form the signal peptide. Residues 47–93 (RLDLGWPKNSEYFTGATFCVAVDSLNGLVYVAQRGDNIPKVLVFSED) form an NHL 1 repeat. A glycan (N-linked (GlcNAc...) asparagine) is linked at Asn-101. 2 NHL repeats span residues 150-196 (TPGK…LSQD) and 200-243 (LWLR…FDKD). 2 N-linked (GlcNAc...) asparagine glycosylation sites follow: Asn-206 and Asn-278. The NHL 4 repeat unit spans residues 294 to 338 (GDCSVVSTIQLADQVLPHLLEVDRKTGAVYVAEIGAKQIQKYIPW).

The protein is NHL repeat-containing protein 3 (Nhlrc3) of Mus musculus (Mouse).